The primary structure comprises 344 residues: Ferrochelatase (344 aa).

Positions 214 and 295 each coordinate Fe cation.

Belongs to the ferrochelatase family.

It localises to the cytoplasm. The enzyme catalyses heme b + 2 H(+) = protoporphyrin IX + Fe(2+). Its pathway is porphyrin-containing compound metabolism; protoheme biosynthesis; protoheme from protoporphyrin-IX: step 1/1. Its function is as follows. Catalyzes the ferrous insertion into protoporphyrin IX. The protein is Ferrochelatase of Agrobacterium fabrum (strain C58 / ATCC 33970) (Agrobacterium tumefaciens (strain C58)).